A 333-amino-acid polypeptide reads, in one-letter code: Ferrochelatase (333 aa).

Positions 202 and 284 each coordinate Fe cation.

This sequence belongs to the ferrochelatase family.

It localises to the cytoplasm. It carries out the reaction heme b + 2 H(+) = protoporphyrin IX + Fe(2+). It functions in the pathway porphyrin-containing compound metabolism; protoheme biosynthesis; protoheme from protoporphyrin-IX: step 1/1. In terms of biological role, catalyzes the ferrous insertion into protoporphyrin IX. This chain is Ferrochelatase, found in Francisella tularensis subsp. holarctica (strain LVS).